The primary structure comprises 32 residues: RTCRCRLGRCSRRESYSGSCNINGRIYSLCCR.

Disulfide bonds link Cys-3–Cys-31, Cys-5–Cys-20, and Cys-10–Cys-30.

It is found in the secreted. Its function is as follows. Has antibacterial activity against the Gram-negative bacterium E.coli and the Gram-positive bacteria L.monocytogenes and S.aureus. Has antifungal activity against C.albicans. The polypeptide is Defensin-3 (Papio hamadryas (Hamadryas baboon)).